The sequence spans 454 residues: GTPase Der (454 aa).

2 EngA-type G domains span residues 3-167 (PVIT…GIAE) and 181-354 (MKIA…AAAM). GTP is bound by residues 9–16 (GRPNVGKS), 56–60 (DTGGF), 119–122 (NKTE), 187–194 (GRPNVGKS), 234–238 (DTAGL), and 299–302 (NKWD). Residues 355–439 (AKLPTPRLTR…PLRIQMNTAK (85 aa)) enclose the KH-like domain.

Belongs to the TRAFAC class TrmE-Era-EngA-EngB-Septin-like GTPase superfamily. EngA (Der) GTPase family. In terms of assembly, associates with the 50S ribosomal subunit.

In terms of biological role, GTPase that plays an essential role in the late steps of ribosome biogenesis. The chain is GTPase Der from Polynucleobacter asymbioticus (strain DSM 18221 / CIP 109841 / QLW-P1DMWA-1) (Polynucleobacter necessarius subsp. asymbioticus).